The sequence spans 468 residues: Chromosomal replication initiator protein DnaA (468 aa).

Residues 1 to 90 (MTQEKWGLLC…NSPMRPARAA (90 aa)) are domain I, interacts with DnaA modulators. The tract at residues 91-126 (RPAAAAAAAAAAVEAPQVSAPRATDTSDVLDGLQAA) is domain II. Residues 127–348 (PLDPRFTFDS…GALTRLFAFA (222 aa)) form a domain III, AAA+ region region. Residues glycine 171, glycine 173, lysine 174, and threonine 175 each coordinate ATP. The domain IV, binds dsDNA stretch occupies residues 349–468 (SLVGREIDME…VEMLRRALEA (120 aa)).

This sequence belongs to the DnaA family. In terms of assembly, oligomerizes as a right-handed, spiral filament on DNA at oriC.

It localises to the cytoplasm. In terms of biological role, plays an essential role in the initiation and regulation of chromosomal replication. ATP-DnaA binds to the origin of replication (oriC) to initiate formation of the DNA replication initiation complex once per cell cycle. Binds the DnaA box (a 9 base pair repeat at the origin) and separates the double-stranded (ds)DNA. Forms a right-handed helical filament on oriC DNA; dsDNA binds to the exterior of the filament while single-stranded (ss)DNA is stabiized in the filament's interior. The ATP-DnaA-oriC complex binds and stabilizes one strand of the AT-rich DNA unwinding element (DUE), permitting loading of DNA polymerase. After initiation quickly degrades to an ADP-DnaA complex that is not apt for DNA replication. Binds acidic phospholipids. The polypeptide is Chromosomal replication initiator protein DnaA (Ruegeria pomeroyi (strain ATCC 700808 / DSM 15171 / DSS-3) (Silicibacter pomeroyi)).